A 102-amino-acid polypeptide reads, in one-letter code: MGSKMASATRVVQVVKPHAPLIKFPNRRDKPKLSASEALGSAALPSHSSAISQHSKGSTSPDLLMHQGPPDTAEIIKSLPQKYRRKPMSQEEMEFIQRGGPE.

Gly-2 is subject to N-acetylglycine. Lys-4 bears the N6-succinyllysine mark. Residues 23–70 (KFPNRRDKPKLSASEALGSAALPSHSSAISQHSKGSTSPDLLMHQGPP) form a disordered region. Residues 33–46 (LSASEALGSAALPS) are compositionally biased toward low complexity. A compositionally biased stretch (polar residues) spans 47-61 (HSSAISQHSKGSTSP). Residues Ser-48, Ser-60, and Ser-89 each carry the phosphoserine modification.

It belongs to the alpha-ketoglutarate dehydrogenase component 4 family. As to quaternary structure, component of the 2-oxoglutarate dehydrogenase complex (OGDHC), composed of OGDH (2-oxoglutarate dehydrogenase; also called E1 subunit), DLST (dihydrolipoamide succinyltransferase; also called E2 subunit) and DLD (dihydrolipoamide dehydrogenase; also called E3 subunit), and the assembly factor KGD4. Within OGDHC complex, interacts (via N-terminus) with E3 subunit and (via C-terminus) with E2 subunit.

The protein resides in the mitochondrion. Its function is as follows. Molecular adapter that is necessary to form a stable 2-oxoglutarate dehydrogenase enzyme complex (OGDHC). Enables the specific recruitment of E3 subunit to E2 subunit in the 2-oxoglutarate dehydrogenase complex (OGDHC). The chain is Alpha-ketoglutarate dehydrogenase component 4 from Mus musculus (Mouse).